The primary structure comprises 737 residues: Disintegrin and metalloproteinase domain-containing protein 2 (737 aa).

A signal peptide spans 1–18 (MWLLLLLLSGLSRLGGLS). A propeptide spanning residues 19-180 (EPQTEGTREK…YKIRSIKPQR (162 aa)) is cleaved from the precursor. Residues 19 to 688 (EPQTEGTREK…ASAYRSKSAR (670 aa)) lie on the Extracellular side of the membrane. N-linked (GlcNAc...) asparagine glycosylation is found at asparagine 128 and asparagine 226. The region spanning 184–381 (HYLEIHIVVE…QSSHCLQNQP (198 aa)) is the Peptidase M12B domain. 4 disulfides stabilise this stretch: cysteine 293–cysteine 376, cysteine 335–cysteine 360, cysteine 337–cysteine 342, and cysteine 450–cysteine 470. Residues asparagine 359, asparagine 464, asparagine 491, and asparagine 571 are each glycosylated (N-linked (GlcNAc...) asparagine). The Disintegrin domain occupies 389–478 (MAVCGNGELE…VCEEDFFVQD (90 aa)). The EGF-like domain occupies 617 to 650 (LNYDCTPEKCNHHGVCNNKKHCHCEPTYLPPDCK). 3 cysteine pairs are disulfide-bonded: cysteine 621/cysteine 632, cysteine 626/cysteine 638, and cysteine 640/cysteine 649. A helical membrane pass occupies residues 689-709 (WPFFLIIPFYVVILVLIGMLV). The Cytoplasmic segment spans residues 710 to 737 (KVYSQRKKWRMDDFSSEEQFESESESKD). Position 731 is a phosphoserine (serine 731).

Heterodimer with ADAM1/fertilin subunit alpha. Post-translationally, the prodomain and the metalloprotease domain are cleaved during the epididymal maturation of the spermatozoa.

The protein localises to the membrane. Its function is as follows. Sperm surface membrane protein that may be involved in sperm-egg plasma membrane adhesion and fusion during fertilization. Could have a direct role in sperm-zona binding or migration of sperm from the uterus into the oviduct. Interactions with egg membrane could be mediated via binding between its disintegrin-like domain to one or more integrins receptors on the egg. This is a non catalytic metalloprotease-like protein. The polypeptide is Disintegrin and metalloproteinase domain-containing protein 2 (Adam2) (Rattus norvegicus (Rat)).